A 706-amino-acid chain; its full sequence is Zinc transporter foi (706 aa).

The signal sequence occupies residues 1–21 (MARHIMAVCVVCLLCAHRLHC). The Extracellular segment spans residues 22–261 (QDHIESLLGP…EKDKDIFYVW (240 aa)). Over residues 40 to 56 (QDQLNARVYTNLSPSSE) the composition is skewed to polar residues. The segment at 40–101 (QDQLNARVYT…HGPTSESRVP (62 aa)) is disordered. N-linked (GlcNAc...) asparagine glycans are attached at residues Asn-74, Asn-119, Asn-176, Asn-182, Asn-196, and Asn-207. Residues 262–282 (IYAFISVFACGILGLVGVAII) form a helical membrane-spanning segment. Topologically, residues 283 to 292 (PFMGSRYYKY) are cytoplasmic. Residues 293 to 313 (IIQYLVALAVGTMTGDALLHL) traverse the membrane as a helical segment. Residues 314 to 329 (LPHSLAGQDERGMIMK) are Extracellular-facing. Residues 330–350 (GLGCLGGIIFFYVMEHALTMI) traverse the membrane as a helical segment. At 351–604 (SEWRKSVEKK…LIKAGMSVKS (254 aa)) the chain is on the cytoplasmic side. Phosphoserine is present on residues Ser-376, Ser-377, and Ser-381. A helical membrane pass occupies residues 605–625 (AVYYNLLTGVLSFIGMIFGIA). Residues 626–631 (FGQSQD) lie on the Extracellular side of the membrane. A helical transmembrane segment spans residues 632-652 (VAQWMFAVAAGLFIYIALVDM). Residues 653–665 (MPEISASHKSLGQ) lie on the Cytoplasmic side of the membrane. Residues 666 to 686 (FLLQILGMLSGVGIMLLIALY) form a helical membrane-spanning segment. Topologically, residues 687–706 (EGDLMSAFGTAGAASHQHAH) are extracellular.

It belongs to the ZIP transporter (TC 2.A.5) family. In terms of processing, glycosylated. Maternal foi has almost completely disappeared by embryonic stage 3 except in the pole cells. In stage 6 embryos, expression is enriched in the invaginating mesoderm. In stage 9 embryos, high levels in the anterior and posterior midgut primordia. In stage 14 embryos, broad expression with low levels in the epidermis.

The protein resides in the cell membrane. Functionally, required for the normal migration of longitudinal and peripheral glial cells. During larval development, required for the migration of the subretinal glia into the eye disk. During embryonic development, also controls the migration of muscle cells toward their attachment sites. Required in the mesoderm for the correct morphogenesis of embryonic gonad and for tracheal branch fusion during tracheal development. Shg may be cooperating with foi to mediate a common mechanism for gonad and tracheal morphogenesis. Acts as a zinc transporter in both yeast and mammalian cells. The protein is Zinc transporter foi of Drosophila melanogaster (Fruit fly).